Reading from the N-terminus, the 252-residue chain is Transcription factor bHLH117 (252 aa).

The interval 103–141 is disordered; it reads LFPSLSPPLPAAKRQKLNSTSSSTTSGSPTASNDGGIIT. Over residues 121–134 the composition is skewed to low complexity; it reads STSSSTTSGSPTAS. In terms of domain architecture, bHLH spans 130–179; the sequence is SPTASNDGGIITKRRKISDKIRSLEKLMPWERKMNLAMTLEESHKYIKFL.

As to quaternary structure, homodimer.

It is found in the nucleus. This is Transcription factor bHLH117 (BHLH117) from Arabidopsis thaliana (Mouse-ear cress).